The following is a 486-amino-acid chain: Glutamyl-tRNA(Gln) amidotransferase subunit A (486 aa).

Catalysis depends on charge relay system residues Lys74 and Ser149. Ser173 functions as the Acyl-ester intermediate in the catalytic mechanism.

It belongs to the amidase family. GatA subfamily. Heterotrimer of A, B and C subunits.

It catalyses the reaction L-glutamyl-tRNA(Gln) + L-glutamine + ATP + H2O = L-glutaminyl-tRNA(Gln) + L-glutamate + ADP + phosphate + H(+). Allows the formation of correctly charged Gln-tRNA(Gln) through the transamidation of misacylated Glu-tRNA(Gln) in organisms which lack glutaminyl-tRNA synthetase. The reaction takes place in the presence of glutamine and ATP through an activated gamma-phospho-Glu-tRNA(Gln). This chain is Glutamyl-tRNA(Gln) amidotransferase subunit A, found in Prochlorococcus marinus (strain MIT 9303).